We begin with the raw amino-acid sequence, 379 residues long: Putative zinc metalloprotease BR1156/BS1330_I1152 (379 aa).

His-33 lines the Zn(2+) pocket. The active site involves Glu-34. His-37 is a Zn(2+) binding site. A run of 4 helical transmembrane segments spans residues 39 to 61 (LVAR…ELLG), 122 to 144 (VFAG…FALY), 305 to 327 (FDWL…LFPL), and 355 to 377 (IFYR…NDLF). The 76-residue stretch at 133–208 (TIAIFSVFFA…LNFTVERDGK (76 aa)) folds into the PDZ domain.

It belongs to the peptidase M50B family. Zn(2+) is required as a cofactor.

It is found in the cell inner membrane. In Brucella suis biovar 1 (strain 1330), this protein is Putative zinc metalloprotease BR1156/BS1330_I1152.